Consider the following 643-residue polypeptide: Probable potassium transport system protein Kup 2 (643 aa).

The tract at residues 1–20 is disordered; that stretch reads MSSHVPSFLRGTPDMTAHGG. A run of 12 helical transmembrane segments spans residues 27 to 47, 70 to 90, 120 to 140, 157 to 177, 185 to 205, 231 to 251, 267 to 287, 300 to 320, 357 to 377, 389 to 409, 419 to 439, and 440 to 460; these read VAGLMLAAIGVVFGDIGTSPL, VLSLVFWAITIIVSFKYVIII, LMVSALGIFAAALFYGDSIIT, PHLEQWVVPLTIVILFVLFAI, VGKMFGPVMLVWFLTLAILGI, GWHAFLALGSVVLAVTGAEAL, WYLLVLPALILNYFGQGALLI, LAPASLALPLVILATLATVIA, IYLPFVNWLLMCMVMVLVVGF, VAVTGTMVIDALLVGTVMLLI, WLIGGFLVVDLAFFLANSIKI, and PDGGWFPLVVGGLLFTILTTW.

Belongs to the HAK/KUP transporter (TC 2.A.72) family.

Its subcellular location is the cell inner membrane. The enzyme catalyses K(+)(in) + H(+)(in) = K(+)(out) + H(+)(out). In terms of biological role, transport of potassium into the cell. Likely operates as a K(+):H(+) symporter. In Paramagnetospirillum magneticum (strain ATCC 700264 / AMB-1) (Magnetospirillum magneticum), this protein is Probable potassium transport system protein Kup 2.